A 497-amino-acid chain; its full sequence is Acetyl-coenzyme A carboxylase carboxyl transferase subunit beta, chloroplastic (497 aa).

Residues 30 to 50 are disordered; sequence GPVENTTVNEDPTRNDTDKNI. Residues 40 to 50 are compositionally biased toward basic and acidic residues; the sequence is DPTRNDTDKNI. The CoA carboxyltransferase N-terminal domain maps to 230-497; that stretch reads VQCECENCYG…FFPLNQNSIK (268 aa). Residues C232, C237, C253, and C256 each coordinate Zn(2+). A C4-type zinc finger spans residues 232 to 256; that stretch reads CECENCYGVNYKKSLNSKMNICEQC.

The protein belongs to the AccD/PCCB family. Acetyl-CoA carboxylase is a heterohexamer composed of biotin carboxyl carrier protein, biotin carboxylase and 2 subunits each of ACCase subunit alpha and ACCase plastid-coded subunit beta (accD). The cofactor is Zn(2+).

The protein localises to the plastid. The protein resides in the chloroplast stroma. The enzyme catalyses N(6)-carboxybiotinyl-L-lysyl-[protein] + acetyl-CoA = N(6)-biotinyl-L-lysyl-[protein] + malonyl-CoA. It participates in lipid metabolism; malonyl-CoA biosynthesis; malonyl-CoA from acetyl-CoA: step 1/1. Functionally, component of the acetyl coenzyme A carboxylase (ACC) complex. Biotin carboxylase (BC) catalyzes the carboxylation of biotin on its carrier protein (BCCP) and then the CO(2) group is transferred by the transcarboxylase to acetyl-CoA to form malonyl-CoA. The protein is Acetyl-coenzyme A carboxylase carboxyl transferase subunit beta, chloroplastic of Gossypium hirsutum (Upland cotton).